Consider the following 510-residue polypeptide: NAD(P)H-quinone oxidoreductase subunit 2, chloroplastic (510 aa).

The next 12 membrane-spanning stretches (helical) occupy residues 24-44 (LLLF…GLIL), 59-79 (WFYF…LFRW), 99-119 (IFQF…VEYI), 124-144 (MAIT…MFLC), 149-169 (LITI…LSGY), 184-204 (LLMG…LYGL), 229-249 (ISIA…PAPF), 295-315 (WHLL…LIAI), 323-343 (MLAY…IVGD), 347-367 (GYAS…GTFA), 395-415 (ALSL…AGFF), and 418-438 (LHLF…IGLL).

The protein belongs to the complex I subunit 2 family. As to quaternary structure, NDH is composed of at least 16 different subunits, 5 of which are encoded in the nucleus.

The protein resides in the plastid. It localises to the chloroplast thylakoid membrane. It carries out the reaction a plastoquinone + NADH + (n+1) H(+)(in) = a plastoquinol + NAD(+) + n H(+)(out). The catalysed reaction is a plastoquinone + NADPH + (n+1) H(+)(in) = a plastoquinol + NADP(+) + n H(+)(out). Its function is as follows. NDH shuttles electrons from NAD(P)H:plastoquinone, via FMN and iron-sulfur (Fe-S) centers, to quinones in the photosynthetic chain and possibly in a chloroplast respiratory chain. The immediate electron acceptor for the enzyme in this species is believed to be plastoquinone. Couples the redox reaction to proton translocation, and thus conserves the redox energy in a proton gradient. In Muilla maritima (Sea muilla), this protein is NAD(P)H-quinone oxidoreductase subunit 2, chloroplastic.